Consider the following 544-residue polypeptide: Chaperonin GroEL 1 (544 aa).

ATP is bound by residues 29-32 (TLGP), 86-90 (DGTTT), Gly413, 479-481 (NAA), and Asp495. The segment at 525–544 (PEPKDNAPAGAGAGGGDFDY) is disordered. Positions 535–544 (AGAGGGDFDY) are enriched in gly residues.

This sequence belongs to the chaperonin (HSP60) family. As to quaternary structure, forms a cylinder of 14 subunits composed of two heptameric rings stacked back-to-back. Interacts with the co-chaperonin GroES.

It localises to the cytoplasm. The enzyme catalyses ATP + H2O + a folded polypeptide = ADP + phosphate + an unfolded polypeptide.. Functionally, together with its co-chaperonin GroES, plays an essential role in assisting protein folding. The GroEL-GroES system forms a nano-cage that allows encapsulation of the non-native substrate proteins and provides a physical environment optimized to promote and accelerate protein folding. This is Chaperonin GroEL 1 from Nostoc sp. (strain PCC 7120 / SAG 25.82 / UTEX 2576).